The sequence spans 449 residues: Streptomycin-6-phosphate phosphatase (449 aa).

A signal peptide spans 1 to 32; sequence MRFAYGRLPWRRGAVLGSALLVLVTAPAASTA. Residue Asp50 participates in Mg(2+) binding. Asp50 contributes to the Zn(2+) binding site. Residue Ser99 is the Phosphoserine intermediate of the active site. Positions 151 and 153 each coordinate Mg(2+). The interval 268-290 is disordered; it reads APGGTAPQRCATRNPGRPAGTPD. Glu321 provides a ligand contact to Mg(2+). Residues Asp326, His330, Asp368, His369, and His412 each coordinate Zn(2+).

The protein belongs to the alkaline phosphatase family. It depends on Mg(2+) as a cofactor. Requires Zn(2+) as cofactor.

The protein localises to the secreted. It carries out the reaction streptomycin 6-phosphate + H2O = streptomycin + phosphate. It participates in antibiotic biosynthesis; streptomycin biosynthesis. Functionally, specifically cleaves both streptomycin-6-phosphate and, more slowly, streptomycin-3''-phosphate during the biosynthesis of streptomycin. This chain is Streptomycin-6-phosphate phosphatase (strK), found in Streptomyces griseus.